The sequence spans 526 residues: Anthranilate synthase component 1 (526 aa).

L-tryptophan-binding positions include Ser-40 and 304–306; that span reads PYM. Residue 341–342 coordinates chorismate; it reads GT. Glu-374 contributes to the Mg(2+) binding site. Residues Tyr-461, Arg-481, 495–497, and Gly-497 each bind chorismate; that span reads GAG. Position 510 (Glu-510) interacts with Mg(2+).

It belongs to the anthranilate synthase component I family. Heterotetramer consisting of two non-identical subunits: a beta subunit (TrpG) and a large alpha subunit (TrpE). The cofactor is Mg(2+).

It catalyses the reaction chorismate + L-glutamine = anthranilate + pyruvate + L-glutamate + H(+). The protein operates within amino-acid biosynthesis; L-tryptophan biosynthesis; L-tryptophan from chorismate: step 1/5. With respect to regulation, feedback inhibited by tryptophan. Its function is as follows. Part of a heterotetrameric complex that catalyzes the two-step biosynthesis of anthranilate, an intermediate in the biosynthesis of L-tryptophan. In the first step, the glutamine-binding beta subunit (TrpG) of anthranilate synthase (AS) provides the glutamine amidotransferase activity which generates ammonia as a substrate that, along with chorismate, is used in the second step, catalyzed by the large alpha subunit of AS (TrpE) to produce anthranilate. In the absence of TrpG, TrpE can synthesize anthranilate directly from chorismate and high concentrations of ammonia. The polypeptide is Anthranilate synthase component 1 (trpE) (Buchnera aphidicola subsp. Tetraneura caerulescens).